Here is a 508-residue protein sequence, read N- to C-terminus: GMP synthase [glutamine-hydrolyzing] (508 aa).

The Glutamine amidotransferase type-1 domain occupies M1 to T189. C78 acts as the Nucleophile in catalysis. Catalysis depends on residues H163 and E165. Residues W190–R383 form the GMPS ATP-PPase domain. An ATP-binding site is contributed by S217–T223.

In terms of assembly, homodimer.

The enzyme catalyses XMP + L-glutamine + ATP + H2O = GMP + L-glutamate + AMP + diphosphate + 2 H(+). It functions in the pathway purine metabolism; GMP biosynthesis; GMP from XMP (L-Gln route): step 1/1. Its function is as follows. Catalyzes the synthesis of GMP from XMP. This chain is GMP synthase [glutamine-hydrolyzing], found in Helicobacter pylori (strain HPAG1).